We begin with the raw amino-acid sequence, 347 residues long: GTP 3',8-cyclase (347 aa).

In terms of domain architecture, Radical SAM core spans 12–242; that stretch reads FRPFGVLRLS…QRIDARWPLR (231 aa). Residue Arg19 participates in GTP binding. Residues Cys26 and Cys30 each contribute to the [4Fe-4S] cluster site. Tyr32 provides a ligand contact to S-adenosyl-L-methionine. Cys33 lines the [4Fe-4S] cluster pocket. Arg65 is a binding site for GTP. Residue Gly69 participates in S-adenosyl-L-methionine binding. Thr104 is a binding site for GTP. Ser129 is a binding site for S-adenosyl-L-methionine. A GTP-binding site is contributed by Lys178. Residue Met212 participates in S-adenosyl-L-methionine binding. Residues Cys275 and Cys278 each coordinate [4Fe-4S] cluster. 280-282 lines the GTP pocket; sequence RLR. Residue Cys292 participates in [4Fe-4S] cluster binding.

Belongs to the radical SAM superfamily. MoaA family. Monomer and homodimer. [4Fe-4S] cluster is required as a cofactor.

It carries out the reaction GTP + AH2 + S-adenosyl-L-methionine = (8S)-3',8-cyclo-7,8-dihydroguanosine 5'-triphosphate + 5'-deoxyadenosine + L-methionine + A + H(+). It participates in cofactor biosynthesis; molybdopterin biosynthesis. Functionally, catalyzes the cyclization of GTP to (8S)-3',8-cyclo-7,8-dihydroguanosine 5'-triphosphate. The polypeptide is GTP 3',8-cyclase (Synechococcus sp. (strain WH7803)).